A 528-amino-acid chain; its full sequence is Probable protein phosphatase 2C 51 (528 aa).

Residues Ser-8–Cys-28 form a helical membrane-spanning segment. One can recognise a PPM-type phosphatase domain in the interval Arg-71–Leu-445. The Mn(2+) site is built by Asp-117, Gly-118, Asp-385, and Asp-436.

The protein belongs to the PP2C family. It depends on Mg(2+) as a cofactor. Mn(2+) is required as a cofactor.

It localises to the membrane. The enzyme catalyses O-phospho-L-seryl-[protein] + H2O = L-seryl-[protein] + phosphate. The catalysed reaction is O-phospho-L-threonyl-[protein] + H2O = L-threonyl-[protein] + phosphate. This Arabidopsis thaliana (Mouse-ear cress) protein is Probable protein phosphatase 2C 51.